Reading from the N-terminus, the 75-residue chain is Pro-glucagon (75 aa).

Belongs to the glucagon family.

It localises to the secreted. In terms of biological role, plays a key role in glucose metabolism and homeostasis. Regulates blood glucose by increasing gluconeogenesis and decreasing glycolysis. This is Pro-glucagon (gcg) from Amia calva (Bowfin).